The following is a 543-amino-acid chain: Zinc finger CCHC domain-containing protein 7 (543 aa).

Residues 51–71 (EEEHEEKNSGNSESSSSKPNQ) are disordered. The span at 59-68 (SGNSESSSSK) shows a compositional bias: low complexity. Glycyl lysine isopeptide (Lys-Gly) (interchain with G-Cter in SUMO2) cross-links involve residues lysine 131, lysine 139, lysine 141, lysine 239, and lysine 254. CCHC-type zinc fingers lie at residues 241–258 (IICRNCDKRGHLSKNCPL), 263–280 (RRCFLCSRRGHLLYSCPA), and 304–321 (KQCDRCHMLGHYTDACTE). Residue lysine 339 forms a Glycyl lysine isopeptide (Lys-Gly) (interchain with G-Cter in SUMO2) linkage. The CCHC-type 4 zinc-finger motif lies at 348-365 (AYCYHCAQKGHYGHECPE). Glycyl lysine isopeptide (Lys-Gly) (interchain with G-Cter in SUMO2) cross-links involve residues lysine 412, lysine 417, and lysine 435. A disordered region spans residues 414 to 543 (PYIKAANENP…FLIKQRKKKS (130 aa)). 2 stretches are compositionally biased toward basic and acidic residues: residues 441-457 (QENKETQKEMKNKNRNW) and 465-475 (RHREVDEDFPR). A Glycyl lysine isopeptide (Lys-Gly) (interchain with G-Cter in SUMO2) cross-link involves residue lysine 478. Residues 479–491 (TYSSPGSFKTQKP) are compositionally biased toward polar residues. Residues serine 482 and serine 485 each carry the phosphoserine modification. Glycyl lysine isopeptide (Lys-Gly) (interchain with G-Cter in SUMO2) cross-links involve residues lysine 487, lysine 490, and lysine 493. Basic residues predominate over residues 493–502 (KPFHRSSHYH). Basic and acidic residues predominate over residues 503 to 515 (TSREDKSPKEGKR). Lysine 537 participates in a covalent cross-link: Glycyl lysine isopeptide (Lys-Gly) (interchain with G-Cter in SUMO2).

In terms of assembly, component of a nucleolar TRAMP-like complex, an ATP-dependent exosome regulatory complex consisting of a helicase (MTREX), an oligadenylate polymerase (TENT4B or TENT4A), and a substrate specific RNA-binding factor (ZCCHC7 or ZCCHC8). Several TRAMP-like complexes exist with specific compositions and are associated with nuclear, or nucleolar RNA exosomes.

It localises to the nucleus. The protein localises to the nucleolus. The chain is Zinc finger CCHC domain-containing protein 7 (ZCCHC7) from Homo sapiens (Human).